Reading from the N-terminus, the 842-residue chain is Oxysterol-binding protein-related protein 7 (842 aa).

Positions 1–28 are disordered; that stretch reads MDFQERDPPFLPESAQSSKPSSAQQASE. Residues 14-27 are compositionally biased toward low complexity; the sequence is SAQSSKPSSAQQAS. Residues 47–142 enclose the PH domain; it reads PERQEGHLLK…WVAQLRAHRL (96 aa). Position 171 is a phosphothreonine (Thr171). Phosphoserine occurs at positions 217, 226, 256, and 272. The segment at 330 to 369 is disordered; that stretch reads DMHQGSELSRMGVSEASTGQRRLHSLSTSSDTTADSFSSL. Positions 354-369 are enriched in low complexity; the sequence is SLSTSSDTTADSFSSL.

This sequence belongs to the OSBP family. As to expression, expressed in epithelium of small and large intestines (at protein level). Expressed in stomach, duodenum, jejunum, ascending colon, spleen, thymus, lymph node, trachea and leukocytes.

It is found in the cytoplasm. The protein resides in the cytosol. The protein localises to the endoplasmic reticulum membrane. Its subcellular location is the cell membrane. The sequence is that of Oxysterol-binding protein-related protein 7 (OSBPL7) from Homo sapiens (Human).